The chain runs to 661 residues: UvrABC system protein B (661 aa).

A Helicase ATP-binding domain is found at 25-414; it reads AGLNSKKRSQ…DTVVELIIRP (390 aa). 38–45 is an ATP binding site; sequence GITGSGKT. The Beta-hairpin motif lies at 91-114; it reads YYDYYQPEAYIARTDTFIEKDSSI. Residues 430–592 form the Helicase C-terminal domain; the sequence is QVEDLIGEIQ…IIPKTINRAI (163 aa). In terms of domain architecture, UVR spans 621–656; it reads KAHIEKLKKDMLKAASNLEFEQAAKLRDQLKTLEEA.

The protein belongs to the UvrB family. Forms a heterotetramer with UvrA during the search for lesions. Interacts with UvrC in an incision complex.

It is found in the cytoplasm. The UvrABC repair system catalyzes the recognition and processing of DNA lesions. A damage recognition complex composed of 2 UvrA and 2 UvrB subunits scans DNA for abnormalities. Upon binding of the UvrA(2)B(2) complex to a putative damaged site, the DNA wraps around one UvrB monomer. DNA wrap is dependent on ATP binding by UvrB and probably causes local melting of the DNA helix, facilitating insertion of UvrB beta-hairpin between the DNA strands. Then UvrB probes one DNA strand for the presence of a lesion. If a lesion is found the UvrA subunits dissociate and the UvrB-DNA preincision complex is formed. This complex is subsequently bound by UvrC and the second UvrB is released. If no lesion is found, the DNA wraps around the other UvrB subunit that will check the other stand for damage. The chain is UvrABC system protein B from Rickettsia felis (strain ATCC VR-1525 / URRWXCal2) (Rickettsia azadi).